We begin with the raw amino-acid sequence, 285 residues long: Homeobox protein Hox-A13b (285 aa).

The homeobox DNA-binding region spans 219 to 278 (GRKKRVPYTKVQLKELEREYAANKFITKDKRRRISAQTNLTERQVTIWFQNRRVKEKKVV).

The protein belongs to the Abd-B homeobox family.

It is found in the nucleus. Its function is as follows. Sequence-specific transcription factor which is part of a developmental regulatory system that provides cells with specific positional identities on the anterior-posterior axis. The chain is Homeobox protein Hox-A13b (hoxa13b) from Takifugu rubripes (Japanese pufferfish).